We begin with the raw amino-acid sequence, 134 residues long: Cytochrome b5 isoform E (134 aa).

Residues 5 to 81 (RKVLSFEEVS…MDKYFIGEID (77 aa)) form the Cytochrome b5 heme-binding domain. The heme site is built by H40 and H64. Residues 107–127 (FIIKILQFLVPILILGLALVV) form a helical membrane-spanning segment. The short motif at 128-134 (RHYTKKD) is the AKR2A-binding sequence (ABS) required for endoplasmic reticulum membrane targeting element.

It belongs to the cytochrome b5 family. As to quaternary structure, interacts with CER1, BI-1, FAH1 and FAH2. Interacts with AKR2A. As to expression, expressed in roots, stems, leaves, flowers and siliques.

The protein localises to the cell membrane. Its subcellular location is the endoplasmic reticulum membrane. Its function is as follows. Membrane bound hemoprotein which function as an electron carrier for several membrane bound oxygenases, including fatty acid desaturases. The chain is Cytochrome b5 isoform E (CYTB5-E) from Arabidopsis thaliana (Mouse-ear cress).